The primary structure comprises 240 residues: Ribonuclease HII (240 aa).

Positions 29–220 constitute an RNase H type-2 domain; it reads EPIAGVDEAG…VRRAAGLEPL (192 aa). Residues Asp-35, Glu-36, and Asp-129 each coordinate a divalent metal cation.

This sequence belongs to the RNase HII family. Mn(2+) is required as a cofactor. Requires Mg(2+) as cofactor.

It is found in the cytoplasm. The catalysed reaction is Endonucleolytic cleavage to 5'-phosphomonoester.. Its function is as follows. Endonuclease that specifically degrades the RNA of RNA-DNA hybrids. The chain is Ribonuclease HII from Nocardioides sp. (strain ATCC BAA-499 / JS614).